The chain runs to 200 residues: Pyridoxal 5'-phosphate synthase subunit PdxT (200 aa).

52-54 (GES) provides a ligand contact to L-glutamine. The Nucleophile role is filled by Cys-84. L-glutamine-binding positions include Arg-116 and 145-146 (IR). Residues His-181 and Glu-183 each act as charge relay system in the active site.

This sequence belongs to the glutaminase PdxT/SNO family. In terms of assembly, in the presence of PdxS, forms a dodecamer of heterodimers. Only shows activity in the heterodimer.

The enzyme catalyses aldehydo-D-ribose 5-phosphate + D-glyceraldehyde 3-phosphate + L-glutamine = pyridoxal 5'-phosphate + L-glutamate + phosphate + 3 H2O + H(+). The catalysed reaction is L-glutamine + H2O = L-glutamate + NH4(+). Its pathway is cofactor biosynthesis; pyridoxal 5'-phosphate biosynthesis. In terms of biological role, catalyzes the hydrolysis of glutamine to glutamate and ammonia as part of the biosynthesis of pyridoxal 5'-phosphate. The resulting ammonia molecule is channeled to the active site of PdxS. This Sulfurisphaera tokodaii (strain DSM 16993 / JCM 10545 / NBRC 100140 / 7) (Sulfolobus tokodaii) protein is Pyridoxal 5'-phosphate synthase subunit PdxT.